Reading from the N-terminus, the 327-residue chain is Probable cytosolic iron-sulfur protein assembly protein CIAO1 homolog (327 aa).

WD repeat units follow at residues 3–42 (GHEDRVWSVAWSPNGFVLASCGGDKTIRIWGKEGDKWICK), 48–87 (GHQRTIRSLGWSPCGTFLASASFDATTCIWDQKSGEFECN), 92–131 (GHENEVKSVDWSVSGSLLATCGRDKSVWIWEVQEDDEYEC), 137–176 (SHTQDVKKVVWHPTKEILASCSYDDTIKLYKEDEDDWSCC), 181–220 (GHESTVWSISFDGSGDRIVSCSDDKTVRIWKSYPPGNQEG), 239–278 (YHDRTIYDVHWSKVSGLIATASGDDCIRIFKEDTNSDRNQ), and 290–327 (AHSMDVNSICWHPKDENILATCSDDGTVKLWRFTPAEE).

The protein belongs to the WD repeat CIA1 family.

Essential component of the cytosolic iron-sulfur (Fe/S) protein assembly machinery. Required for the maturation of extramitochondrial Fe/S proteins. This Nematostella vectensis (Starlet sea anemone) protein is Probable cytosolic iron-sulfur protein assembly protein CIAO1 homolog.